A 127-amino-acid polypeptide reads, in one-letter code: Small ribosomal subunit protein uS11 (127 aa).

Belongs to the universal ribosomal protein uS11 family. As to quaternary structure, part of the 30S ribosomal subunit. Interacts with proteins S7 and S18. Binds to IF-3.

Located on the platform of the 30S subunit, it bridges several disparate RNA helices of the 16S rRNA. Forms part of the Shine-Dalgarno cleft in the 70S ribosome. In Flavobacterium johnsoniae (strain ATCC 17061 / DSM 2064 / JCM 8514 / BCRC 14874 / CCUG 350202 / NBRC 14942 / NCIMB 11054 / UW101) (Cytophaga johnsonae), this protein is Small ribosomal subunit protein uS11.